The primary structure comprises 217 residues: Polyadenylate-binding protein 3 (217 aa).

A disordered region spans residues 1-28 (MEEEEHEVYGGEIPEVGDTDVPDPDIDM). A compositionally biased stretch (acidic residues) spans 15–28 (EVGDTDVPDPDIDM). The stretch at 30-71 (AADEDAVTELAEMKRRLKEMEEEAAALREMQAKVEKEMGATQ) forms a coiled coil. Residues 75–216 (SMAANQEGKE…FRRPMRYMPY (142 aa)) form a necessary for homooligomerization region. Residues 89–165 (RSVYVGNVDY…RQLKVSPKRT (77 aa)) enclose the RRM domain. The Nuclear localization signal signature appears at 162–169 (PKRTNVPG).

In terms of assembly, monomer and homooligomer. Binds RNA as a monomer and oligomerizes when bound to poly(A). Forms a complex with cleavage and polyadenylation specificity factor (CPSF) subunits PAPS4, PABN1, PABN2, CSTF50 and FIPS5. Interacts with CSP3.

It is found in the nucleus speckle. The protein resides in the cytoplasm. Its function is as follows. Involved in the 3'-end formation of mRNA precursors (pre-mRNA) by the addition of a poly(A) tail of 200-250 nt to the upstream cleavage product. Stimulates poly(A) polymerase (PAPOLA) conferring processivity on the poly(A) tail elongation reaction and also controls the poly(A) tail length. Increases the affinity of poly(A) polymerase for RNA. Binds to poly(A) and to poly(G) with high affinity. May protect the poly(A) tail from degradation. The chain is Polyadenylate-binding protein 3 from Arabidopsis thaliana (Mouse-ear cress).